A 219-amino-acid polypeptide reads, in one-letter code: Ribose-5-phosphate isomerase A (219 aa).

Substrate-binding positions include 28–31, 81–84, and 94–97; these read TGST, DGAD, and KGGG. Glu103 (proton acceptor) is an active-site residue. Lys121 lines the substrate pocket.

This sequence belongs to the ribose 5-phosphate isomerase family. As to quaternary structure, homodimer.

The enzyme catalyses aldehydo-D-ribose 5-phosphate = D-ribulose 5-phosphate. The protein operates within carbohydrate degradation; pentose phosphate pathway; D-ribose 5-phosphate from D-ribulose 5-phosphate (non-oxidative stage): step 1/1. Functionally, catalyzes the reversible conversion of ribose-5-phosphate to ribulose 5-phosphate. This is Ribose-5-phosphate isomerase A from Enterobacter cloacae.